The chain runs to 502 residues: Zinc finger C3HC-type protein 1 (502 aa).

At A2 the chain carries N-acetylalanine. S24 bears the Phosphoserine mark. Position 28 is a phosphothreonine (T28). The tract at residues 36 to 73 (IDEGIAPEEGGVDAKDTSATSQSVNGSPQAEQPSLEST) is disordered. The span at 52 to 72 (TSATSQSVNGSPQAEQPSLES) shows a compositional bias: polar residues. Residues S58 and S62 each carry the phosphoserine modification. T84 bears the Phosphothreonine mark. The C3HC-type zinc-finger motif lies at 102 to 156 (CAKYGWVTVECDMLKCSSCQAFLCASLQPAFDFDRYKQRCAELKKALCTAHEKFC). Positions 170–210 (LPLDEPAILVSEFLDRFQSLCHLDLQLPSLRPEDLKTMCLT) are F-box-like. Positions 302–423 (SSPIPGLEGR…SSRSFFDPTS (122 aa)) are disordered. Phosphoserine is present on residues S321 and S329. The span at 327–338 (TRSQDATFSPGS) shows a compositional bias: polar residues. T333 is subject to Phosphothreonine. A phosphoserine mark is found at S335, S338, S344, S354, S359, and S370. Positions 351–360 (RTRSWDSSSP) are enriched in polar residues. A compositionally biased stretch (low complexity) spans 371 to 380 (PTTRTRPVTR). Phosphoserine is present on S381. A phosphothreonine mark is found at T384 and T387. S395 is subject to Phosphoserine. Positions 396–402 (PLRKAKR) match the Nuclear localization signal motif. 2 positions are modified to phosphoserine: S407 and S483. Residues 407-422 (SSSSSDTSSRSFFDPT) show a composition bias toward low complexity.

As to quaternary structure, interacts with TPR; this interaction mediates ZC3HC1 nuclear envelopes (NE)-association but also required for proper positioning of a substantial amount of TPR at the nuclear basket (NB). In terms of processing, phosphorylated. May also be weakly phosphorylated on Tyr residues. In terms of tissue distribution, widely expressed. Highly expressed in heart, skeletal muscle and testis. Expressed in brain, placenta, lung, kidney, liver, pancreas, spleen, thymus, prostate, ovary small intestine and colon. Weakly or not expressed in leukocytes.

Its subcellular location is the nucleus. The protein resides in the nucleus envelope. Functionally, required for proper positioning of a substantial amount of TPR at the nuclear basket (NB) through interaction with TPR. This is Zinc finger C3HC-type protein 1 from Homo sapiens (Human).